The primary structure comprises 262 residues: Tropinone reductase homolog At2g29290 (262 aa).

13–37 is a binding site for NADP(+); that stretch reads LVTGGTKGIGEAVVEELSILGARVH. Ser-146 lines the substrate pocket. The active-site Proton acceptor is the Tyr-159.

The protein belongs to the short-chain dehydrogenases/reductases (SDR) family. SDR65C subfamily.

This Arabidopsis thaliana (Mouse-ear cress) protein is Tropinone reductase homolog At2g29290.